The following is a 146-amino-acid chain: Large ribosomal subunit protein uL15 (146 aa).

The disordered stretch occupies residues 1 to 56; it reads MKLHELRAAEGANKASKRVGRGTGSGLGKTSGKGQNGQNSRSGGGVRPGFEGGQMP. Gly residues-rich tracts occupy residues 21 to 35 and 42 to 52; these read RGTGSGLGKTSGKGQ and SGGGVRPGFEG.

The protein belongs to the universal ribosomal protein uL15 family. As to quaternary structure, part of the 50S ribosomal subunit.

Functionally, binds to the 23S rRNA. The sequence is that of Large ribosomal subunit protein uL15 from Clostridium botulinum (strain Loch Maree / Type A3).